A 319-amino-acid chain; its full sequence is Glutathione synthetase (319 aa).

Positions 125–311 constitute an ATP-grasp domain; the sequence is KLFTAWFPEL…ITGMLMDAIE (187 aa). 151-207 contacts ATP; that stretch reads HQEHGDIILKPLDGMGGTSIFRVKQDDPNLSVIIETLTELSSRFCMAQNFLPAIKEG. Residues glutamate 281 and asparagine 283 each coordinate Mg(2+).

It belongs to the prokaryotic GSH synthase family. Mg(2+) is required as a cofactor. Mn(2+) serves as cofactor.

The catalysed reaction is gamma-L-glutamyl-L-cysteine + glycine + ATP = glutathione + ADP + phosphate + H(+). It functions in the pathway sulfur metabolism; glutathione biosynthesis; glutathione from L-cysteine and L-glutamate: step 2/2. This Yersinia pestis protein is Glutathione synthetase.